Consider the following 441-residue polypeptide: Probable dihydroorotase-like protein (441 aa).

The segment at 121-140 (VNAHHQPPGDPQAENRPDSA) is disordered.

Belongs to the metallo-dependent hydrolases superfamily. DHOase family. PyrC' subfamily.

Functionally, non-functional DHOase. The chain is Probable dihydroorotase-like protein (pyrC') from Synechocystis sp. (strain ATCC 27184 / PCC 6803 / Kazusa).